Reading from the N-terminus, the 799-residue chain is Armadillo repeat-containing protein wrm-1 (799 aa).

A compositionally biased stretch (basic and acidic residues) spans 1-10; it reads MEERGPDIEK. The interval 1-60 is disordered; the sequence is MEERGPDIEKYGSQPCTPLSFDPMLPSTSRVATPVRPSSTLSARQAPASPFRAQPQNMEP. Over residues 26–43 the composition is skewed to polar residues; the sequence is PSTSRVATPVRPSSTLSA. The stretch at 454 to 496 is one ARM repeat; that stretch reads ESIRRVIQVVGSDDATIAERATGVLRNIGQPNKQNKVIMVRNG.

As to quaternary structure, interacts (independently of ARM repeat) with nhr-25. Component of the beta-catenin-lit-1 complex (also called the lit-1/wrm-1 complex or the wrm-1/lit-1 kinase complex) at least composed of lit-1 and wrm-1. Interacts (via N-terminus) with lit-1; the interaction is direct and activates lit-1 kinase activity which leads to the phosphorylation of pop-1. This promotes pop-1 interaction with par-5 and translocation of pop-1 from the nucleus to the cytoplasm.

The protein localises to the cytoplasm. Its subcellular location is the cell cortex. The protein resides in the nucleus. Antagonistic role in the Wnt signaling pathway that operates in embryogenesis. When located at the cortex it has been shown to inhibit Wnt signaling during asymmetric cell division but when relocated to the nucleus it shows positive regulation. Has a role in blastomere signaling during endoderm specification. Component of the beta-catenin-lit-1 complex which promotes phosphorylation, down-regulation and subcellular relocation of pop-1. Within the complex, activates lit-1-dependent kinase activity. Can substitute for bar-1 indicating functional redundancy. Appears to have a role in centrosome positioning. Involved in the development of distal tip cells (DTC) by regulating the asymmetric distribution of cye-1 and cki-1 between the daughters of Z1.a and Z4.p cells. The protein is Armadillo repeat-containing protein wrm-1 of Caenorhabditis briggsae.